Reading from the N-terminus, the 171-residue chain is Co-chaperone protein HscB homolog (171 aa).

Residues 2-74 form the J domain; sequence NHFELFRLPF…ISRAEYMLSE (73 aa).

It belongs to the HscB family. Interacts with HscA and stimulates its ATPase activity.

Functionally, co-chaperone involved in the maturation of iron-sulfur cluster-containing proteins. Seems to help targeting proteins to be folded toward HscA. The protein is Co-chaperone protein HscB homolog of Photobacterium profundum (strain SS9).